We begin with the raw amino-acid sequence, 555 residues long: MTTARPVKTRNEGQWALGDREPLNDTEKIKLADGPLNVRERIINVYAKQGFDSIDKSDLRGRFRWMGLYTQREQGYDGSWTGDDNTDKIEAKYFMMRVRSDGKAMSAHTMRTLGQISTEFARDTADISDRENLQLHWIRIEDVPEIWRRLESVGLQTTEACGDCPRGIHGSPLAGDSLDEVLDPSPAIEEIVRRSLNNPEYANLPRKYKTAVSGLQDVSHETHDVAFVGVEHPEHGPGLDLWVGGGLSTNPMLAQRLSVWVPLDEVPDVWEAVTQLFRDYGYRRLRAKARLKFLVKDWGIEKFREILEQEYLNRRLIDGPAPAPVKHTIDHVGVQKIKNGLNAVGVAPIAGRVSGTTLSAVADLMEQVGSDRARWTPFQKLVILDVPDDKVDELVTGLDALGLPSRPSSWRKNTMACTGIEFCKLSFAETRVRTQTLVPELERRLADVDAQLDAPISVHLNGCPNSCARIQVADIGFKGQWIDNGDGTSVEGFQVHLGGGLGEQSGFGRKLRQHKVTSEELGDYIDRVTRKYLEGRNDGETFASWALRADEEELR.

The segment at residues 69–161 (YTQREQGYDG…SVGLQTTEAC (93 aa)) is a cross-link (3'-(S-cysteinyl)-tyrosine (Tyr-Cys)). Residues C417, C423, C463, and C467 each coordinate [4Fe-4S] cluster. C467 is a binding site for siroheme.

The protein belongs to the nitrite and sulfite reductase 4Fe-4S domain family. In terms of assembly, monomer. The cofactor is siroheme. It depends on [4Fe-4S] cluster as a cofactor.

It carries out the reaction hydrogen sulfide + 6 oxidized [2Fe-2S]-[ferredoxin] + 3 H2O = sulfite + 6 reduced [2Fe-2S]-[ferredoxin] + 7 H(+). In terms of biological role, catalyzes the reduction of sulfite to sulfide, a step in the biosynthesis of sulfur-containing amino acids and cofactors. The sequence is that of Sulfite reductase [ferredoxin] 1 (sir1) from Mycolicibacterium paratuberculosis (strain ATCC BAA-968 / K-10) (Mycobacterium paratuberculosis).